The sequence spans 399 residues: Tyrosine--tRNA ligase (399 aa).

The 'HIGH' region motif lies at 42–51 (PTAPDLHLGH). The short motif at 226–230 (KMSKS) is the 'KMSKS' region element. K229 lines the ATP pocket. One can recognise an S4 RNA-binding domain in the interval 337–398 (LPVFQVVKQA…GKRKFASVVL (62 aa)).

It belongs to the class-I aminoacyl-tRNA synthetase family. TyrS type 2 subfamily. As to quaternary structure, homodimer.

It is found in the cytoplasm. The catalysed reaction is tRNA(Tyr) + L-tyrosine + ATP = L-tyrosyl-tRNA(Tyr) + AMP + diphosphate + H(+). Its function is as follows. Catalyzes the attachment of tyrosine to tRNA(Tyr) in a two-step reaction: tyrosine is first activated by ATP to form Tyr-AMP and then transferred to the acceptor end of tRNA(Tyr). This is Tyrosine--tRNA ligase from Aromatoleum aromaticum (strain DSM 19018 / LMG 30748 / EbN1) (Azoarcus sp. (strain EbN1)).